Reading from the N-terminus, the 162-residue chain is Class I hydrophobin dewC (162 aa).

The signal sequence occupies residues 1–21; sequence MQFTIASLIATAVLGLQMASA. Intrachain disulfides connect Cys-43-Cys-119, Cys-50-Cys-113, Cys-51-Cys-90, and Cys-120-Cys-156.

It belongs to the fungal hydrophobin family. In terms of assembly, self-assembles to form functional amyloid fibrils called rodlets. Self-assembly into fibrillar rodlets occurs spontaneously at hydrophobic:hydrophilic interfaces and the rodlets further associate laterally to form amphipathic monolayers.

Its subcellular location is the secreted. It is found in the spore wall. Functionally, aerial growth, conidiation, and dispersal of filamentous fungi in the environment rely upon a capability of their secreting small amphipathic proteins called hydrophobins (HPBs) with low sequence identity. Class I can self-assemble into an outermost layer of rodlet bundles on aerial cell surfaces, conferring cellular hydrophobicity that supports fungal growth, development and dispersal; whereas Class II form highly ordered films at water-air interfaces through intermolecular interactions but contribute nothing to the rodlet structure. DewC is a class I hydrophobin that contributes to the hydrophobicity of the spore surface. In Emericella nidulans (strain FGSC A4 / ATCC 38163 / CBS 112.46 / NRRL 194 / M139) (Aspergillus nidulans), this protein is Class I hydrophobin dewC.